The sequence spans 233 residues: Probable translation initiation factor, mitochondrial (233 aa).

Residues 1 to 39 (MNSYLQFPHRKLFIQFSYSLTSVFRKCQSRTFMNSQFAS) constitute a mitochondrion transit peptide.

This sequence belongs to the IF-3 family.

It is found in the mitochondrion. Functionally, may be involved in mitochondrial translation initiation. This is Probable translation initiation factor, mitochondrial from Schizosaccharomyces pombe (strain 972 / ATCC 24843) (Fission yeast).